The sequence spans 139 residues: Aspartate 1-decarboxylase (139 aa).

Ser-25 serves as the catalytic Schiff-base intermediate with substrate; via pyruvic acid. Ser-25 bears the Pyruvic acid (Ser) mark. A substrate-binding site is contributed by Thr-57. Tyr-58 (proton donor) is an active-site residue. Substrate is bound at residue 73-75; sequence GAA. The segment at 117–139 is disordered; that stretch reads TGSDPADAPAGSGLLRGDRPAGR.

It belongs to the PanD family. Heterooctamer of four alpha and four beta subunits. Pyruvate is required as a cofactor. Post-translationally, is synthesized initially as an inactive proenzyme, which is activated by self-cleavage at a specific serine bond to produce a beta-subunit with a hydroxyl group at its C-terminus and an alpha-subunit with a pyruvoyl group at its N-terminus.

The protein localises to the cytoplasm. It carries out the reaction L-aspartate + H(+) = beta-alanine + CO2. The protein operates within cofactor biosynthesis; (R)-pantothenate biosynthesis; beta-alanine from L-aspartate: step 1/1. In terms of biological role, catalyzes the pyruvoyl-dependent decarboxylation of aspartate to produce beta-alanine. The chain is Aspartate 1-decarboxylase from Nocardioides sp. (strain ATCC BAA-499 / JS614).